Here is an 85-residue protein sequence, read N- to C-terminus: UPF0335 protein Oant_1161 (85 aa).

Belongs to the UPF0335 family.

This chain is UPF0335 protein Oant_1161, found in Brucella anthropi (strain ATCC 49188 / DSM 6882 / CCUG 24695 / JCM 21032 / LMG 3331 / NBRC 15819 / NCTC 12168 / Alc 37) (Ochrobactrum anthropi).